Here is a 95-residue protein sequence, read N- to C-terminus: Ascorbate-specific PTS system EIIB component (95 aa).

The 95-residue stretch at 1–95 folds into the PTS EIIB type-2 domain; the sequence is MENKNLHIIA…EIKQALSKVL (95 aa). Cys12 (phosphocysteine intermediate) is an active-site residue. At Cys12 the chain carries Phosphocysteine.

Its subcellular location is the cytoplasm. It carries out the reaction N(pros)-phospho-L-histidyl-[protein] + L-ascorbate(out) = L-ascorbate 6-phosphate(in) + L-histidyl-[protein]. The phosphoenolpyruvate-dependent sugar phosphotransferase system (sugar PTS), a major carbohydrate active transport system, catalyzes the phosphorylation of incoming sugar substrates concomitantly with their translocation across the cell membrane. The enzyme II UlaABC PTS system is involved in ascorbate transport. The chain is Ascorbate-specific PTS system EIIB component (ulaB) from Mycoplasma pneumoniae (strain ATCC 29342 / M129 / Subtype 1) (Mycoplasmoides pneumoniae).